The following is a 412-amino-acid chain: Transcription factor IIIA (412 aa).

The segment at 20 to 43 (YLCQYCGISRSKNYLITKHIQSHH) adopts a C2H2-type 1; degenerate zinc-finger fold. 3 consecutive C2H2-type zinc fingers follow at residues 66–88 (HTCQ…MQSH), 94–118 (FTCY…LLTH), and 123–148 (FKCP…KKYH). The interval 144–207 (VKKYHSNDNR…NGNGDSQPAE (64 aa)) is disordered. A compositionally biased stretch (basic and acidic residues) spans 148-188 (HSNDNRDKDNTGLGDGDKDNTCKGDDDKEKSGSGGCEKENE). A Glycyl lysine isopeptide (Lys-Gly) (interchain with G-Cter in ubiquitin) cross-link involves residue Lys-185. The C2H2-type 5 zinc finger occupies 215–239 (VVCKEIGCGKAFKYPSQLQKHQDSH). The C2H2-type 6; degenerate zinc-finger motif lies at 247 to 272 (AFCSEPGCMKYFTNEECLKSHIRSCH). A C2H2-type 7; degenerate zinc finger spans residues 275-296 (INCEICGSKHLKKNIKRHLRTH). A C2H2-type 8 zinc finger spans residues 305-330 (IKCEVEGCSSTFSKASNLQKHMKAVH). The C2H2-type 9; degenerate zinc finger occupies 336 to 362 (FVCGFPGCGMRFAYKHVRNKHENSGYH). The short motif at 384 to 391 (LKRKQVTA) is the Nuclear localization signal element.

Post-translationally, protein product TFIIIA (44 kDa) is proteolytically cleaved into TFIIIA-C (34 kDa). In terms of tissue distribution, expressed in seedlings, flowers, siliques and seeds.

The protein localises to the nucleus. The protein resides in the nucleolus. Its function is as follows. Essential protein. Isoform 1 is a transcription activator the binds both 5S rDNA and 5S rRNA and stimulates the transcription of 5S rRNA gene. Isoform 1 regulates 5S rRNA levels during development. This chain is Transcription factor IIIA, found in Arabidopsis thaliana (Mouse-ear cress).